Consider the following 257-residue polypeptide: Imidazole glycerol phosphate synthase subunit HisF (257 aa).

Active-site residues include aspartate 11 and aspartate 130.

This sequence belongs to the HisA/HisF family. In terms of assembly, heterodimer of HisH and HisF.

It localises to the cytoplasm. It carries out the reaction 5-[(5-phospho-1-deoxy-D-ribulos-1-ylimino)methylamino]-1-(5-phospho-beta-D-ribosyl)imidazole-4-carboxamide + L-glutamine = D-erythro-1-(imidazol-4-yl)glycerol 3-phosphate + 5-amino-1-(5-phospho-beta-D-ribosyl)imidazole-4-carboxamide + L-glutamate + H(+). The protein operates within amino-acid biosynthesis; L-histidine biosynthesis; L-histidine from 5-phospho-alpha-D-ribose 1-diphosphate: step 5/9. Its function is as follows. IGPS catalyzes the conversion of PRFAR and glutamine to IGP, AICAR and glutamate. The HisF subunit catalyzes the cyclization activity that produces IGP and AICAR from PRFAR using the ammonia provided by the HisH subunit. This Xylella fastidiosa (strain M23) protein is Imidazole glycerol phosphate synthase subunit HisF.